The primary structure comprises 155 residues: SsrA-binding protein (155 aa).

The protein belongs to the SmpB family.

The protein localises to the cytoplasm. Its function is as follows. Required for rescue of stalled ribosomes mediated by trans-translation. Binds to transfer-messenger RNA (tmRNA), required for stable association of tmRNA with ribosomes. tmRNA and SmpB together mimic tRNA shape, replacing the anticodon stem-loop with SmpB. tmRNA is encoded by the ssrA gene; the 2 termini fold to resemble tRNA(Ala) and it encodes a 'tag peptide', a short internal open reading frame. During trans-translation Ala-aminoacylated tmRNA acts like a tRNA, entering the A-site of stalled ribosomes, displacing the stalled mRNA. The ribosome then switches to translate the ORF on the tmRNA; the nascent peptide is terminated with the 'tag peptide' encoded by the tmRNA and targeted for degradation. The ribosome is freed to recommence translation, which seems to be the essential function of trans-translation. This chain is SsrA-binding protein, found in Bacillus cereus (strain G9842).